The primary structure comprises 136 residues: Transcription antitermination protein NusB (136 aa).

The protein belongs to the NusB family.

Functionally, involved in transcription antitermination. Required for transcription of ribosomal RNA (rRNA) genes. Binds specifically to the boxA antiterminator sequence of the ribosomal RNA (rrn) operons. The chain is Transcription antitermination protein NusB from Salinispora arenicola (strain CNS-205).